The primary structure comprises 107 residues: MMKVLVVVALLVTLISYSSSEGIDDLEADELLSLMANEQTRKECIPKHHECTSNKHGCCRGNFFKYKCQCTTVVTQDGEQTERCFCGTPPHHKAAELVVGFGKKFFG.

An N-terminal signal peptide occupies residues 1 to 20 (MMKVLVVVALLVTLISYSSS). Residues 21 to 41 (EGIDDLEADELLSLMANEQTR) constitute a propeptide that is removed on maturation. 4 disulfides stabilise this stretch: cysteine 44/cysteine 59, cysteine 51/cysteine 68, cysteine 58/cysteine 86, and cysteine 70/cysteine 84.

It belongs to the neurotoxin 19 (CSTX) family. 04 (U1-Lctx) subfamily. As to expression, expressed by the venom gland.

It is found in the secreted. The protein is U1-lycotoxin-Ls1f of Lycosa singoriensis (Wolf spider).